The primary structure comprises 178 residues: Probable chorismate pyruvate-lyase (178 aa).

Substrate-binding residues include Arg72, Leu110, and Glu169.

The protein belongs to the UbiC family.

It is found in the cytoplasm. It catalyses the reaction chorismate = 4-hydroxybenzoate + pyruvate. Its pathway is cofactor biosynthesis; ubiquinone biosynthesis. Removes the pyruvyl group from chorismate, with concomitant aromatization of the ring, to provide 4-hydroxybenzoate (4HB) for the ubiquinone pathway. In Nitrosomonas europaea (strain ATCC 19718 / CIP 103999 / KCTC 2705 / NBRC 14298), this protein is Probable chorismate pyruvate-lyase.